A 172-amino-acid polypeptide reads, in one-letter code: Adenine phosphoribosyltransferase (172 aa).

The protein belongs to the purine/pyrimidine phosphoribosyltransferase family. As to quaternary structure, homodimer.

The protein resides in the cytoplasm. It catalyses the reaction AMP + diphosphate = 5-phospho-alpha-D-ribose 1-diphosphate + adenine. Its pathway is purine metabolism; AMP biosynthesis via salvage pathway; AMP from adenine: step 1/1. In terms of biological role, catalyzes a salvage reaction resulting in the formation of AMP, that is energically less costly than de novo synthesis. This chain is Adenine phosphoribosyltransferase, found in Synechococcus sp. (strain CC9311).